We begin with the raw amino-acid sequence, 355 residues long: tRNA-specific 2-thiouridylase MnmA (355 aa).

ATP-binding positions include 6–13 (LLSGGVDS) and Leu-33. Residue Cys-100 is the Nucleophile of the active site. Cys-100 and Cys-195 are joined by a disulfide. Position 123 (Gly-123) interacts with ATP. The segment at 145–147 (KDQ) is interaction with tRNA. The active-site Cysteine persulfide intermediate is Cys-195.

The protein belongs to the MnmA/TRMU family.

The protein resides in the cytoplasm. The enzyme catalyses S-sulfanyl-L-cysteinyl-[protein] + uridine(34) in tRNA + AH2 + ATP = 2-thiouridine(34) in tRNA + L-cysteinyl-[protein] + A + AMP + diphosphate + H(+). Functionally, catalyzes the 2-thiolation of uridine at the wobble position (U34) of tRNA, leading to the formation of s(2)U34. The polypeptide is tRNA-specific 2-thiouridylase MnmA (Borreliella burgdorferi (strain ATCC 35210 / DSM 4680 / CIP 102532 / B31) (Borrelia burgdorferi)).